The following is a 500-amino-acid chain: Probable malate:quinone oxidoreductase (500 aa).

Belongs to the MQO family. It depends on FAD as a cofactor.

It catalyses the reaction (S)-malate + a quinone = a quinol + oxaloacetate. The protein operates within carbohydrate metabolism; tricarboxylic acid cycle; oxaloacetate from (S)-malate (quinone route): step 1/1. The sequence is that of Probable malate:quinone oxidoreductase from Corynebacterium glutamicum (strain R).